The primary structure comprises 179 residues: Large ribosomal subunit protein uL5 (179 aa).

This sequence belongs to the universal ribosomal protein uL5 family. In terms of assembly, part of the 50S ribosomal subunit; part of the 5S rRNA/L5/L18/L25 subcomplex. Contacts the 5S rRNA and the P site tRNA. Forms a bridge to the 30S subunit in the 70S ribosome.

Its function is as follows. This is one of the proteins that bind and probably mediate the attachment of the 5S RNA into the large ribosomal subunit, where it forms part of the central protuberance. In the 70S ribosome it contacts protein S13 of the 30S subunit (bridge B1b), connecting the 2 subunits; this bridge is implicated in subunit movement. Contacts the P site tRNA; the 5S rRNA and some of its associated proteins might help stabilize positioning of ribosome-bound tRNAs. The protein is Large ribosomal subunit protein uL5 of Enterococcus faecalis (strain ATCC 700802 / V583).